Here is a 100-residue protein sequence, read N- to C-terminus: Aspartyl/glutamyl-tRNA(Asn/Gln) amidotransferase subunit C (100 aa).

It belongs to the GatC family. In terms of assembly, heterotrimer of A, B and C subunits.

It catalyses the reaction L-glutamyl-tRNA(Gln) + L-glutamine + ATP + H2O = L-glutaminyl-tRNA(Gln) + L-glutamate + ADP + phosphate + H(+). The enzyme catalyses L-aspartyl-tRNA(Asn) + L-glutamine + ATP + H2O = L-asparaginyl-tRNA(Asn) + L-glutamate + ADP + phosphate + 2 H(+). Allows the formation of correctly charged Asn-tRNA(Asn) or Gln-tRNA(Gln) through the transamidation of misacylated Asp-tRNA(Asn) or Glu-tRNA(Gln) in organisms which lack either or both of asparaginyl-tRNA or glutaminyl-tRNA synthetases. The reaction takes place in the presence of glutamine and ATP through an activated phospho-Asp-tRNA(Asn) or phospho-Glu-tRNA(Gln). The polypeptide is Aspartyl/glutamyl-tRNA(Asn/Gln) amidotransferase subunit C (Streptococcus pneumoniae (strain Hungary19A-6)).